The following is a 333-amino-acid chain: Fructose-1,6-bisphosphatase class 1 (333 aa).

Residues Glu-92, Asp-113, Leu-115, and Asp-116 each coordinate Mg(2+). Substrate contacts are provided by residues 116 to 119 (DGSS), Asn-209, Tyr-242, and Lys-272. Glu-278 provides a ligand contact to Mg(2+).

It belongs to the FBPase class 1 family. As to quaternary structure, homotetramer. Mg(2+) serves as cofactor.

The protein localises to the cytoplasm. It carries out the reaction beta-D-fructose 1,6-bisphosphate + H2O = beta-D-fructose 6-phosphate + phosphate. The protein operates within carbohydrate biosynthesis; Calvin cycle. The chain is Fructose-1,6-bisphosphatase class 1 from Chlorobium phaeovibrioides (strain DSM 265 / 1930) (Prosthecochloris vibrioformis (strain DSM 265)).